The primary structure comprises 330 residues: ADP-L-glycero-D-manno-heptose-6-epimerase (330 aa).

Residues 11 to 12, 32 to 33, Lys39, Lys54, 75 to 79, and Asn92 contribute to the NADP(+) site; these read FI, DN, and EGACS. The active-site Proton acceptor is Tyr139. Lys143 is a binding site for NADP(+). Asn168 provides a ligand contact to substrate. NADP(+) contacts are provided by Val169 and Lys177. Catalysis depends on Lys177, which acts as the Proton acceptor. Substrate contacts are provided by residues Arg179, His186, 200–203, Arg213, and Tyr292; that span reads FGEY.

This sequence belongs to the NAD(P)-dependent epimerase/dehydratase family. HldD subfamily. As to quaternary structure, homopentamer. It depends on NADP(+) as a cofactor.

The catalysed reaction is ADP-D-glycero-beta-D-manno-heptose = ADP-L-glycero-beta-D-manno-heptose. The protein operates within nucleotide-sugar biosynthesis; ADP-L-glycero-beta-D-manno-heptose biosynthesis; ADP-L-glycero-beta-D-manno-heptose from D-glycero-beta-D-manno-heptose 7-phosphate: step 4/4. Functionally, catalyzes the interconversion between ADP-D-glycero-beta-D-manno-heptose and ADP-L-glycero-beta-D-manno-heptose via an epimerization at carbon 6 of the heptose. The sequence is that of ADP-L-glycero-D-manno-heptose-6-epimerase from Burkholderia pseudomallei (strain 1026b).